We begin with the raw amino-acid sequence, 212 residues long: Ribonuclease P protein component 3 (212 aa).

Belongs to the eukaryotic/archaeal RNase P protein component 3 family. As to quaternary structure, consists of a catalytic RNA component and at least 4-5 protein subunits.

It localises to the cytoplasm. The catalysed reaction is Endonucleolytic cleavage of RNA, removing 5'-extranucleotides from tRNA precursor.. In terms of biological role, part of ribonuclease P, a protein complex that generates mature tRNA molecules by cleaving their 5'-ends. The polypeptide is Ribonuclease P protein component 3 (Pyrococcus abyssi (strain GE5 / Orsay)).